Consider the following 308-residue polypeptide: Elongation factor Ts (308 aa).

Residues Thr-79–Val-82 form an involved in Mg(2+) ion dislocation from EF-Tu region.

The protein belongs to the EF-Ts family.

Its subcellular location is the cytoplasm. Functionally, associates with the EF-Tu.GDP complex and induces the exchange of GDP to GTP. It remains bound to the aminoacyl-tRNA.EF-Tu.GTP complex up to the GTP hydrolysis stage on the ribosome. The protein is Elongation factor Ts of Bdellovibrio bacteriovorus (strain ATCC 15356 / DSM 50701 / NCIMB 9529 / HD100).